A 480-amino-acid chain; its full sequence is Protein nucleotidyltransferase YdiU (480 aa).

The ATP site is built by glycine 86, glycine 88, arginine 89, lysine 109, aspartate 121, glycine 122, arginine 172, and arginine 179. The active-site Proton acceptor is aspartate 248. Mg(2+)-binding residues include asparagine 249 and aspartate 258. Aspartate 258 contacts ATP.

This sequence belongs to the SELO family. Mg(2+) is required as a cofactor. Requires Mn(2+) as cofactor.

It carries out the reaction L-seryl-[protein] + ATP = 3-O-(5'-adenylyl)-L-seryl-[protein] + diphosphate. It catalyses the reaction L-threonyl-[protein] + ATP = 3-O-(5'-adenylyl)-L-threonyl-[protein] + diphosphate. The catalysed reaction is L-tyrosyl-[protein] + ATP = O-(5'-adenylyl)-L-tyrosyl-[protein] + diphosphate. The enzyme catalyses L-histidyl-[protein] + UTP = N(tele)-(5'-uridylyl)-L-histidyl-[protein] + diphosphate. It carries out the reaction L-seryl-[protein] + UTP = O-(5'-uridylyl)-L-seryl-[protein] + diphosphate. It catalyses the reaction L-tyrosyl-[protein] + UTP = O-(5'-uridylyl)-L-tyrosyl-[protein] + diphosphate. Functionally, nucleotidyltransferase involved in the post-translational modification of proteins. It can catalyze the addition of adenosine monophosphate (AMP) or uridine monophosphate (UMP) to a protein, resulting in modifications known as AMPylation and UMPylation. The sequence is that of Protein nucleotidyltransferase YdiU from Salmonella enteritidis PT4 (strain P125109).